The primary structure comprises 456 residues: tRNA (guanine(37)-N(1))-methyltransferase (456 aa).

Residues histidine 246, 284–285 (DL), 310–311 (DG), and asparagine 336 each bind S-adenosyl-L-methionine.

It belongs to the class I-like SAM-binding methyltransferase superfamily. TRM5/TYW2 family. Monomer.

It localises to the mitochondrion matrix. The protein localises to the nucleus. The protein resides in the cytoplasm. The enzyme catalyses guanosine(37) in tRNA + S-adenosyl-L-methionine = N(1)-methylguanosine(37) in tRNA + S-adenosyl-L-homocysteine + H(+). Its function is as follows. Specifically methylates the N1 position of guanosine-37 in various cytoplasmic and mitochondrial tRNAs. Methylation is not dependent on the nature of the nucleoside 5' of the target nucleoside. This is the first step in the biosynthesis of wybutosine (yW), a modified base adjacent to the anticodon of tRNAs and required for accurate decoding. This is tRNA (guanine(37)-N(1))-methyltransferase from Ciona intestinalis (Transparent sea squirt).